Consider the following 402-residue polypeptide: MSVAFASARPRGKGEVTQQTIQKMLDENHHLIQCILDYQSKGKTAECTQYQQILHRNLVYLATIADSNQNMQSLLPAPPTQSMTLGPGGLSQSGSAQGLHSQGSLSDAIGAGLPPSSLMQAQIGNGPNHVSLQQTAQSTLPTTSMSMSGSGHGSGPGYSHSGPASQSVPLQSQGAISNYVSRANINMQSNPVSMMHQQAASSHYSAAQGGSQHYQGQSMAMMGQSGQGGGVMGQRPMAPYRPSQQGSSQQYLGQEEYYGGEQYGHGQAASEPMSQQYYPDGHGDYAYQPASYTDQSYDRSFEDSTQHYYEGGNSQYSQQQTGYQQGTAQQQTYSQQQYPNQQSYPGQQQGYGPAQGAPSQYSSYQQGQGQQYGSYRASQTGPSTQQQRPYGYEQGQYGNYQQ.

The N-terminal auto-inhibitory domain; necessary for interaction with SMARCA4/BRG1 stretch occupies residues 1–148 (MSVAFASARP…TLPTTSMSMS (148 aa)). Residues 50–53 (YQQI) carry the SH2-binding motif. Disordered stretches follow at residues 72–129 (QSLL…GPNH), 141–170 (PTTSMSMSGSGHGSGPGYSHSGPASQSVPL), 195–250 (MHQQ…SSQQ), 262–290 (QYGHGQAASEPMSQQYYPDGHGDYAYQPA), and 305–402 (TQHY…NYQQ). Residues 92-106 (QSGSAQGLHSQGSLS) show a composition bias toward low complexity. The span at 117 to 129 (SLMQAQIGNGPNH) shows a compositional bias: polar residues. The interval 149–237 (GSGHGSGPGY…GGGVMGQRPM (89 aa)) is methionine-rich intra-molecular domain. Positions 196–224 (HQQAASSHYSAAQGGSQHYQGQSMAMMGQ) are enriched in low complexity. The tract at residues 251–323 (YLGQEEYYGG…SQYSQQQTGY (73 aa)) is MFD domain. Composition is skewed to low complexity over residues 311–379 (GGNS…RASQ) and 390–402 (YGYEQGQYGNYQQ). Residues 340–402 (NQQSYPGQQQ…EQGQYGNYQQ (63 aa)) form a necessary for nuclear localization region. An SH2-binding motif is present at residues 359-362 (SQYS). Residues 377-385 (ASQTGPSTQ) carry the SH3-binding motif. Residues 393-402 (EQGQYGNYQQ) form a necessary for interaction with CREBBP and for the recruitment of CREBBP to the nuclear bodies region. An SH2-binding motif is present at residues 397–400 (YGNY).

This sequence belongs to the SS18 family. Homodimer. Dimerization may be necessary for its function in neuronal dendritic development. Interacts (via C-terminus) with CREBBP (via N-terminus), EP300 and SMARCA4/BRG1. Interacts with the nBAF complex. Association with CREBBP facilitates transcription while the association with SMARCA4/BRG1 suppresses CREST-mediated transcription in resting neurons.

It is found in the nucleus. The protein resides in the chromosome. It localises to the centromere. Its subcellular location is the kinetochore. Its function is as follows. Transcriptional activator which is required for calcium-dependent dendritic growth and branching in cortical neurons. Recruits CREB-binding protein (CREBBP) to nuclear bodies. Component of the CREST-BRG1 complex, a multiprotein complex that regulates promoter activation by orchestrating a calcium-dependent release of a repressor complex and a recruitment of an activator complex. In resting neurons, transcription of the c-FOS promoter is inhibited by BRG1-dependent recruitment of a phospho-RB1-HDAC1 repressor complex. Upon calcium influx, RB1 is dephosphorylated by calcineurin, which leads to release of the repressor complex. At the same time, there is increased recruitment of CREBBP to the promoter by a CREST-dependent mechanism, which leads to transcriptional activation. The CREST-BRG1 complex also binds to the NR2B promoter, and activity-dependent induction of NR2B expression involves a release of HDAC1 and recruitment of CREBBP. The protein is Calcium-responsive transactivator (SS18L1) of Bos taurus (Bovine).